The primary structure comprises 495 residues: Maintenance of mitochondrial morphology protein 1 (495 aa).

The Lumenal portion of the chain corresponds to 1-22 (MALQQHEPAPFAPQSSLSFTQG). A helical membrane pass occupies residues 23–43 (FLLGQLSVVLLIGAFIKFFIF). Residues 44-495 (GEAPPPPSRG…PVGTPGIPDN (452 aa)) are Cytoplasmic-facing. 4 disordered regions span residues 63-94 (YSSV…PSTS), 269-320 (ASTE…SPKS), 382-428 (WPRM…EPEG), and 440-495 (GLGA…IPDN). Composition is skewed to polar residues over residues 65–74 (SVYSPPQDSQ) and 82–94 (STSN…PSTS). Residues 128–379 (QPESLDWFNV…EPRVQVVGLP (252 aa)) enclose the SMP-LTD domain. A compositionally biased stretch (pro residues) spans 271–289 (TEPPEPLQTPAGSPAPPTS). The segment covering 418 to 428 (FSDDHGREPEG) has biased composition (basic and acidic residues). The segment covering 458 to 469 (RSSSMTRQQSGG) has biased composition (polar residues).

It belongs to the MMM1 family. As to quaternary structure, homodimer. Component of the ER-mitochondria encounter structure (ERMES) or MDM complex, composed of mmm1, mdm10, mdm12 and mdm34. An MMM1 homodimer associates with one molecule of mdm12 on each side in a pairwise head-to-tail manner, and the SMP-LTD domains of mmm1 and mdm12 generate a continuous hydrophobic tunnel for phospholipid trafficking.

Its subcellular location is the endoplasmic reticulum membrane. Its function is as follows. Component of the ERMES/MDM complex, which serves as a molecular tether to connect the endoplasmic reticulum (ER) and mitochondria. Components of this complex are involved in the control of mitochondrial shape and protein biogenesis, and function in nonvesicular lipid trafficking between the ER and mitochondria. The mdm12-mmm1 subcomplex functions in the major beta-barrel assembly pathway that is responsible for biogenesis of all outer membrane beta-barrel proteins, and acts in a late step after the SAM complex. The mdm10-mdm12-mmm1 subcomplex further acts in the TOM40-specific pathway after the action of the mdm12-mmm1 complex. Essential for establishing and maintaining the structure of mitochondria and maintenance of mtDNA nucleoids. The chain is Maintenance of mitochondrial morphology protein 1 from Penicillium rubens (strain ATCC 28089 / DSM 1075 / NRRL 1951 / Wisconsin 54-1255) (Penicillium chrysogenum).